Reading from the N-terminus, the 360-residue chain is Phospho-N-acetylmuramoyl-pentapeptide-transferase (360 aa).

A run of 10 helical transmembrane segments spans residues 18 to 38 (VFSYLTFRAIVSLLTALFLSL), 72 to 92 (PTMGGIMILTSITVSVLMWAY), 94 to 114 (SNPYVWCVLFVLVGYGIVGFV), 132 to 152 (WKYFWQSVIALVVAFAMYAVG), 168 to 188 (IMPQLGLLYVLLAYFVIVGTS), 199 to 219 (GLAIMPTVFVAAGFALVAWAT), 236 to 256 (AGELVIVCTAIVGAGLGFLWF), 263 to 283 (VFMGDVGSLALGGALGTIAVL), 288 to 308 (FLLLIMGGVFVVETLSVILQV), and 338 to 358 (VIVRFWIISLMLVLIGLATLK).

This sequence belongs to the glycosyltransferase 4 family. MraY subfamily. Requires Mg(2+) as cofactor.

It is found in the cell inner membrane. The catalysed reaction is UDP-N-acetyl-alpha-D-muramoyl-L-alanyl-gamma-D-glutamyl-meso-2,6-diaminopimeloyl-D-alanyl-D-alanine + di-trans,octa-cis-undecaprenyl phosphate = di-trans,octa-cis-undecaprenyl diphospho-N-acetyl-alpha-D-muramoyl-L-alanyl-D-glutamyl-meso-2,6-diaminopimeloyl-D-alanyl-D-alanine + UMP. Its pathway is cell wall biogenesis; peptidoglycan biosynthesis. Functionally, catalyzes the initial step of the lipid cycle reactions in the biosynthesis of the cell wall peptidoglycan: transfers peptidoglycan precursor phospho-MurNAc-pentapeptide from UDP-MurNAc-pentapeptide onto the lipid carrier undecaprenyl phosphate, yielding undecaprenyl-pyrophosphoryl-MurNAc-pentapeptide, known as lipid I. In Serratia proteamaculans (strain 568), this protein is Phospho-N-acetylmuramoyl-pentapeptide-transferase.